The following is a 444-amino-acid chain: Glutamate--tRNA ligase (444 aa).

A 'HIGH' region motif is present at residues 12–22 (PSPTGFLHVGG). Positions 213 to 217 (KMSKR) match the 'KMSKS' region motif. Lys-216 is a binding site for ATP.

This sequence belongs to the class-I aminoacyl-tRNA synthetase family. Glutamate--tRNA ligase type 1 subfamily. In terms of assembly, monomer.

Its subcellular location is the cytoplasm. The enzyme catalyses tRNA(Glu) + L-glutamate + ATP = L-glutamyl-tRNA(Glu) + AMP + diphosphate. Functionally, catalyzes the attachment of glutamate to tRNA(Glu) in a two-step reaction: glutamate is first activated by ATP to form Glu-AMP and then transferred to the acceptor end of tRNA(Glu). The polypeptide is Glutamate--tRNA ligase (Methylacidiphilum infernorum (isolate V4) (Methylokorus infernorum (strain V4))).